The chain runs to 138 residues: MLVIKMLFKYQIKTNKREELVDITPYIISAISESKVKDGIAVIYVPHTTAGITINENADPSVKHDIINFLSHLIPKNWNFTHLEGNSDAHIKSSLVGCSQTIIIKDGKPLLGTWQGIFFAEFDGPRRREFYVKIIGDK.

Belongs to the UPF0047 family.

This Methanocaldococcus jannaschii (strain ATCC 43067 / DSM 2661 / JAL-1 / JCM 10045 / NBRC 100440) (Methanococcus jannaschii) protein is UPF0047 protein MJ1081.